The primary structure comprises 219 residues: Large ribosomal subunit protein uL4c (219 aa).

The tract at residues 53-81 (REHTASTKTKSQVRGGGKKPWKQKGTGRA) is disordered. A compositionally biased stretch (basic residues) spans 68 to 79 (GGKKPWKQKGTG).

The protein belongs to the universal ribosomal protein uL4 family. In terms of assembly, part of the 50S ribosomal subunit.

It is found in the plastid. The protein localises to the chloroplast. Functionally, probably binds the 23S rRNA. The sequence is that of Large ribosomal subunit protein uL4c (rpl4) from Cyanidium caldarium (Red alga).